A 23-amino-acid chain; its full sequence is Coenzyme PQQ synthesis protein A (23 aa).

Positions 15 to 19 (EVTLY) form a cross-link, pyrroloquinoline quinone (Glu-Tyr).

It belongs to the PqqA family.

It participates in cofactor biosynthesis; pyrroloquinoline quinone biosynthesis. Its function is as follows. Required for coenzyme pyrroloquinoline quinone (PQQ) biosynthesis. PQQ is probably formed by cross-linking a specific glutamate to a specific tyrosine residue and excising these residues from the peptide. This chain is Coenzyme PQQ synthesis protein A, found in Klebsiella pneumoniae (strain 342).